An 84-amino-acid polypeptide reads, in one-letter code: Sec-independent protein translocase protein TatA (84 aa).

Residues 1–21 (MGGISIWQLLIVAVIVVLLFG) traverse the membrane as a helical segment. 2 stretches are compositionally biased toward basic and acidic residues: residues 42–55 (AMSD…KTSQ) and 64–84 (IADK…KEQV). Residues 42–84 (AMSDDDAKQDKTSQDADFTAKSIADKQGEAKKEDAKSQDKEQV) form a disordered region.

This sequence belongs to the TatA/E family. In terms of assembly, the Tat system comprises two distinct complexes: a TatABC complex, containing multiple copies of TatA, TatB and TatC subunits, and a separate TatA complex, containing only TatA subunits. Substrates initially bind to the TatABC complex, which probably triggers association of the separate TatA complex to form the active translocon.

It is found in the cell inner membrane. Part of the twin-arginine translocation (Tat) system that transports large folded proteins containing a characteristic twin-arginine motif in their signal peptide across membranes. TatA could form the protein-conducting channel of the Tat system. The polypeptide is Sec-independent protein translocase protein TatA (Salmonella typhi).